The primary structure comprises 251 residues: MLNLLNTLFLNVISNDVPTPYGIYFQDSATPNQEGILELHDNIMFYLFIILGLVSWMLFTIVKTYSKNPMAYKYIKHGQTIEIIWTMFPAVILLIIAFPSFILLYLCDEVISPAMTIKAIGYQWYWKYEYSDFINDNGETIEFESYVIPDDLLEEGQLRLLDTDTSVVVPVDTHIRFVVTGADVIHDFAIPSLGIKVDANPGRLNQVSALIQREGVFYGQCSELCGVNHAAMPIKIEAVSLPKFLEWLNEQ.

Transmembrane regions (helical) follow at residues Asn-42 to Val-62 and Ile-83 to Leu-103. 6 residues coordinate Cu cation: His-186, Cys-221, Glu-223, Cys-225, His-229, and Met-232. Residue Glu-223 participates in Mg(2+) binding.

This sequence belongs to the cytochrome c oxidase subunit 2 family. In terms of assembly, component of the cytochrome c oxidase (complex IV, CIV), a multisubunit enzyme composed of a catalytic core of 3 subunits and several supernumerary subunits. The complex exists as a monomer or a dimer and forms supercomplexes (SCs) in the inner mitochondrial membrane with ubiquinol-cytochrome c oxidoreductase (cytochrome b-c1 complex, complex III, CIII). It depends on Cu cation as a cofactor.

Its subcellular location is the mitochondrion inner membrane. The enzyme catalyses 4 Fe(II)-[cytochrome c] + O2 + 8 H(+)(in) = 4 Fe(III)-[cytochrome c] + 2 H2O + 4 H(+)(out). In terms of biological role, component of the cytochrome c oxidase, the last enzyme in the mitochondrial electron transport chain which drives oxidative phosphorylation. The respiratory chain contains 3 multisubunit complexes succinate dehydrogenase (complex II, CII), ubiquinol-cytochrome c oxidoreductase (cytochrome b-c1 complex, complex III, CIII) and cytochrome c oxidase (complex IV, CIV), that cooperate to transfer electrons derived from NADH and succinate to molecular oxygen, creating an electrochemical gradient over the inner membrane that drives transmembrane transport and the ATP synthase. Cytochrome c oxidase is the component of the respiratory chain that catalyzes the reduction of oxygen to water. Electrons originating from reduced cytochrome c in the intermembrane space (IMS) are transferred via the dinuclear copper A center (CU(A)) of subunit 2 and heme A of subunit 1 to the active site in subunit 1, a binuclear center (BNC) formed by heme A3 and copper B (CU(B)). The BNC reduces molecular oxygen to 2 water molecules using 4 electrons from cytochrome c in the IMS and 4 protons from the mitochondrial matrix. This Candida glabrata (strain ATCC 2001 / BCRC 20586 / JCM 3761 / NBRC 0622 / NRRL Y-65 / CBS 138) (Yeast) protein is Cytochrome c oxidase subunit 2 (COX2).